We begin with the raw amino-acid sequence, 712 residues long: TIR domain-containing adapter molecule 1 (712 aa).

Positions 1–153 (MACTGPSLPS…CGWDIAGDPG (153 aa)) are TRIF-NTD. Residues 84 to 91 (EDPEEPPD) carry the TRAF6-binding motif. Residues 207–210 (LEIS) carry the pLxIS motif motif. A Phosphoserine; by TBK1 modification is found at Ser-210. 2 disordered regions span residues 216-316 (PFLS…SLPL) and 336-384 (LSVE…LFPS). Residue Lys-229 forms a Glycyl lysine isopeptide (Lys-Gly) (interchain with G-Cter in ubiquitin) linkage. The TRAF6-binding motif lies at 248–255 (QEPEEMSW). The span at 265–275 (PELPSSPPPGL) shows a compositional bias: pro residues. Residues 299-309 (NYPVECTEGSA) carry the TRAF6-binding motif. Residues 347 to 369 (KPCPPTPTTPETSPPPPPPPPSS) show a composition bias toward pro residues. A TIR domain is found at 393-553 (KFYNFVILHA…QDTRALREQS (161 aa)). Positions 512–712 (RLDEHSQIFA…APEDKTQEAE (201 aa)) are sufficient to induce apoptosis. Pro residues-rich tracts occupy residues 620–633 (PFPT…PPPL) and 640–649 (TPPPPSPQPA). A disordered region spans residues 620–677 (PFPTWPGCPQPPPLHAWQAGTPPPPSPQPAAFPQSLPFPQSPAFPTASPAPPQSPGLQ). The segment covering 650–666 (AFPQSLPFPQSPAFPTA) has biased composition (low complexity).

Homodimer. Found in a multi-helicase-TICAM1 complex at least composed of DHX36, DDX1, DDX21 and TICAM1; this complex exists in resting cells with or without poly(I:C) RNA ligand stimulation. Interacts (via TIR domain) with DDX21 (via C-terminus). Interacts (via TIR domain) with DHX36 (via C-terminus). Interacts with AZI2 and IRF7. Interacts with TICAM2 in TLR4 recruitment. Interaction with PIAS4 inhibits the TICAM1-induced NF-kappa-B, IRF and IFNB1 activation. Interacts with IKBKB and IKBKE. Interaction with SARM1 blocks TICAM1-dependent transcription factor activation. Interacts with TRAF3. Interacts (when phosphorylated) with IRF3; following activation and phosphorylation on the pLxIS motif by TBK1, recruits IRF3. Interacts with TBK1, TRAF6 and RIPK1 and these interactions are enhanced in the presence of WDFY1. Interacts with TRAFD1. Interacts with UBQLN1 (via UBA domain). Interacts with TLR4. Interacts with WDFY1 in response to poly(I:C). Interacts (via the TIR domain) with TLR3 in response to poly(I:C) and this interaction is enhanced in the presence of WDFY1. Interacts with TRIM56. Component of a multi-helicase-TICAM1 complex that acts as a cytoplasmic sensor of viral double-stranded RNA (dsRNA) and plays a role in the activation of a cascade of antiviral responses including the induction of pro-inflammatory cytokines. Interacts (via the TIR domain) with TLR5. Interacts with TRIM8. Interacts with TAX1BP1 and TRIM32; these interactions target TICAM1 to TAX1BP1-mediated selective autophagic degradation. Interacts with DDX50. In terms of assembly, (Microbial infection) Interacts with hepatitis C virus (HCV) NS3/4A protease; this interaction leads to TICAM1 cleavage, thereby disrupting TLR3 signaling and preventing the establishment of an antiviral state. As to quaternary structure, (Microbial infection) Interacts with Seneca Valley virus protease 3C; this interaction allows the cleavage of TICAM1/TRIF and subsequent suppression of host innate immunity. (Microbial infection) Interacts (via C-terminus) with coxsackievirus B3 (CVB3) protease 3C. In terms of processing, phosphorylated by TBK1. Following activation, phosphorylated by TBK1 at Ser-210 in the pLxIS motif. The phosphorylated pLxIS motif constitutes an IRF3-binding motif, leading to recruitment of the transcription factor IRF3 to induce type-I interferons and other cytokines. Post-translationally, polyubiquitinated at Lys-229 by TRIM38 with 'Lys-48'-linked chains, leading to proteasomal degradation. Polyubiquitinated with 'Lys-6'- and 'Lys-33'-linked chains in a TRIM8-dependent manner; ubiquitination disrupts the interaction with TBK1 and subsequent interferon production. (Microbial infection) Cleaved and degraded by hepatitis A virus (HAV) protein 3CD allowing the virus to disrupt host TLR3 signaling. In terms of processing, (Microbial infection) Cleaved by CVB3 protease 3C allowing the virus to disrupt host TLR3 signaling. Post-translationally, (Microbial infection) Cleaved by Seneca Valley virus protease 3C allowing the virus to disrupt host TLR3 signaling. (Microbial infection) Cleaved by protease 3C of human enterovirus D68 (EV68) allowing the virus to disrupt host TLR3 signaling. In terms of processing, (Microbial infection) Cleaved by HCV protease NS3/4A, thereby disrupting TLR3 signaling and preventing the establishment of an antiviral state. In terms of tissue distribution, ubiquitously expressed but with higher levels in liver.

The protein resides in the cytoplasmic vesicle. Its subcellular location is the autophagosome. The protein localises to the cytoplasm. It localises to the cytosol. It is found in the mitochondrion. Involved in innate immunity against invading pathogens. Adapter used by TLR3, TLR4 (through TICAM2) and TLR5 to mediate NF-kappa-B and interferon-regulatory factor (IRF) activation, and to induce apoptosis. Ligand binding to these receptors results in TRIF recruitment through its TIR domain. Distinct protein-interaction motifs allow recruitment of the effector proteins TBK1, TRAF6 and RIPK1, which in turn, lead to the activation of transcription factors IRF3 and IRF7, NF-kappa-B and FADD respectively. Phosphorylation by TBK1 on the pLxIS motif leads to recruitment and subsequent activation of the transcription factor IRF3 to induce expression of type I interferon and exert a potent immunity against invading pathogens. Component of a multi-helicase-TICAM1 complex that acts as a cytoplasmic sensor of viral double-stranded RNA (dsRNA) and plays a role in the activation of a cascade of antiviral responses including the induction of pro-inflammatory cytokines. The protein is TIR domain-containing adapter molecule 1 (TICAM1) of Homo sapiens (Human).